Reading from the N-terminus, the 348-residue chain is Phenylalanine--tRNA ligase alpha subunit (348 aa).

A Mg(2+)-binding site is contributed by E259.

The protein belongs to the class-II aminoacyl-tRNA synthetase family. Phe-tRNA synthetase alpha subunit type 1 subfamily. As to quaternary structure, tetramer of two alpha and two beta subunits. The cofactor is Mg(2+).

It is found in the cytoplasm. The enzyme catalyses tRNA(Phe) + L-phenylalanine + ATP = L-phenylalanyl-tRNA(Phe) + AMP + diphosphate + H(+). In Lactiplantibacillus plantarum (strain ATCC BAA-793 / NCIMB 8826 / WCFS1) (Lactobacillus plantarum), this protein is Phenylalanine--tRNA ligase alpha subunit.